The chain runs to 214 residues: Thymidylate kinase (214 aa).

12-19 lines the ATP pocket; that stretch reads GGEGAGKS.

Belongs to the thymidylate kinase family.

The enzyme catalyses dTMP + ATP = dTDP + ADP. Functionally, phosphorylation of dTMP to form dTDP in both de novo and salvage pathways of dTTP synthesis. This is Thymidylate kinase from Gluconobacter oxydans (strain 621H) (Gluconobacter suboxydans).